The primary structure comprises 89 residues: UPF0335 protein Nwi_0989 (89 aa).

This sequence belongs to the UPF0335 family.

In Nitrobacter winogradskyi (strain ATCC 25391 / DSM 10237 / CIP 104748 / NCIMB 11846 / Nb-255), this protein is UPF0335 protein Nwi_0989.